A 66-amino-acid polypeptide reads, in one-letter code: Type 3 secretion system chaperone YscE (66 aa).

It belongs to the YscE family. In terms of assembly, component of the heterodimeric YscE-YscG chaperone. The YscE-YscG chaperone forms a stable ternary complex with YscF/SctF.

Its subcellular location is the cytoplasm. Chaperone of the type III secretion system (T3SS), also called injectisome, which is used to inject bacterial effector proteins into eukaryotic host cells. Along with YscG, prevents premature polymerization of the YscF/SctF needle protein within the cytoplasm. Required for Yop secretion. This chain is Type 3 secretion system chaperone YscE, found in Yersinia enterocolitica.